Here is a 119-residue protein sequence, read N- to C-terminus: Large ribosomal subunit protein P3 (119 aa).

The interval 81–119 is disordered; the sequence is GAAAGAASGGAAAEAPKAEEKKEEEKEESEDDLGFSLFD. Positions 84 to 95 are enriched in low complexity; it reads AGAASGGAAAEA.

This sequence belongs to the eukaryotic ribosomal protein P1/P2 family. In terms of processing, phosphorylated.

Plays an important role in the elongation step of protein synthesis. This Oryza sativa subsp. japonica (Rice) protein is Large ribosomal subunit protein P3.